The primary structure comprises 390 residues: Cystathionine beta-lyase (390 aa).

Position 202 is an N6-(pyridoxal phosphate)lysine (Lys-202).

It belongs to the trans-sulfuration enzymes family. Requires pyridoxal 5'-phosphate as cofactor.

The protein resides in the cytoplasm. The protein localises to the nucleus. It carries out the reaction L,L-cystathionine + H2O = L-homocysteine + pyruvate + NH4(+). The enzyme catalyses an S-substituted L-cysteine + H2O = a thiol + pyruvate + NH4(+). The protein operates within amino-acid biosynthesis; L-methionine biosynthesis via de novo pathway; L-homocysteine from L-cystathionine: step 1/1. The chain is Cystathionine beta-lyase (str3) from Schizosaccharomyces pombe (strain 972 / ATCC 24843) (Fission yeast).